The primary structure comprises 652 residues: Forkhead box protein O1 (652 aa).

Disordered stretches follow at residues 1 to 62 and 112 to 154; these read MAEA…ASAS and VHPA…SSRR. Position 24 is a phosphothreonine; by PKB/AKT1 or PKB/AKT2 and SGK1 (Thr-24). The segment covering 35-62 has biased composition (low complexity); that stretch reads SNSTTSSPAPSGGAAANPDAAASLASAS. The span at 114–133 shows a compositional bias: pro residues; that stretch reads PAPPQPPPTGPLSQPPPVPP. Positions 134-146 are enriched in low complexity; that stretch reads SAAAAAGPLAGQP. Residues 156-232 constitute a DNA-binding region (fork-head); the sequence is AWGNLSYADL…VQNEGTGKSS (77 aa). DNA-binding regions lie at residues 208-215 and 231-234; these read NSIRHNLS and SSWW. The residue at position 209 (Ser-209) is a Phosphoserine; by STK4/MST1. Ser-215, Ser-231, and Ser-232 each carry phosphoserine. Disordered stretches follow at residues 231–342 and 383–410; these read SSWW…DVHS and SLTV…PNTS. Residues Lys-242 and Lys-245 each carry the N6-acetyllysine modification. Residue Ser-246 is modified to Phosphoserine; by CDK1. 2 positions are modified to omega-N-methylarginine; by PRMT1: Arg-248 and Arg-250. The short motif at 248 to 250 is the Nuclear localization signal element; that stretch reads RRR. A Phosphoserine; by PKB/AKT1 and SGK1 modification is found at Ser-253. Residues Lys-259, Lys-262, and Lys-271 each carry the N6-acetyllysine modification. Basic residues predominate over residues 261–272; it reads AKSRGRAAKKKA. Residues 280–562 are sufficient for interaction with NLK; sequence GPGDSPGSQF…TPVKTPLQVP (283 aa). Phosphoserine occurs at positions 284 and 295. A compositionally biased stretch (polar residues) spans 306–323; it reads NWSTFRPRTSSNASTISG. Ser-316 is modified (phosphoserine; by PKB/AKT1 or PKB/AKT2). At Ser-319 the chain carries Phosphoserine; by CK1 and SGK1. Ser-322 is modified (phosphoserine; by CK1). Ser-326 carries the post-translational modification Phosphoserine. At Thr-330 the chain carries Phosphothreonine. Positions 360-456 are required for interaction with RUNX2; sequence SEISNPENME…GGLNQYNCAP (97 aa). Positions 392-401 are enriched in polar residues; the sequence is PGSMMQQTPC. At Lys-420 the chain carries N6-acetyllysine. A Required for interaction with SIRT1 motif is present at residues 459–463; sequence LKELL.

In terms of assembly, interacts with EP300 and CREBBP; the interactions acetylate FOXO1. Interacts with the 14-3-3 proteins, YWHAG and YWHAZ; the interactions require insulin-stimulated phosphorylation on Thr-24, promote nuclear exit and loss of transcriptional activity. Interacts with SKP2; the interaction ubiquitinates FOXO1 leading to its proteasomal degradation. Interacts with PMRT1; methylates FOXO1, prevents PKB/AKT1 phosphorylation and retains FOXO1 in the nucleus. Interacts (via an N-terminal domain) with FCOR; the interaction is direct, occurs in a forskolin-independent manner and prevents SIRT1 binding to FOXO1. Interacts (via the C-terminal half) with ATF4 (via its DNA-binding domain); the interaction occurs in osteoblasts, regulates glucose homeostasis via suppression of beta-cell proliferation and subsequent decrease in insulin production. Interacts with RUNX2; the interaction inhibits RUNX2 transcriptional activity and mediates the IGF1/insulin-dependent BGLAP expression in osteoblasts. Interacts with PPP2R1A; the interaction regulates the dephosphorylation of FOXO1 at Thr-24 and Ser-253 leading to its nuclear import. Binds to CDK1. Interacts with LRPPRC. Interacts with RUNX2; the interaction inhibits RUNX2 transcriptional activity and mediates the IGF1/insulin-dependent BGLAP expression in osteoblasts. Interacts with NLK. Interacts with SIRT1; the interaction results in the deacetylation of FOXO1 leading to activation of FOXO1-mediated transcription of genes involved in DNA repair and stress resistance. The interaction requires the presence of KRIT1 and is inhibited by FCOR. Interacts with SIRT2; the interaction is disrupted in response to oxidative stress or serum deprivation, leading to increased level of acetylated FOXO1, which promotes stress-induced autophagy by stimulating E1-like activating enzyme ATG7. Interacts (acetylated form) with ATG7; the interaction is increased in response to oxidative stress or serum deprivation and promotes the autophagic process leading to cell death. Interacts (acetylated form) with PPARG. Interacts with XBP1 isoform 2; this interaction is direct and leads to FOXO1 ubiquitination and degradation via the proteasome pathway. Interacts (via the Fork-head domain) with CEBPA; the interaction increases when FOXO1 is deacetylated. Interacts with WDFY2. Forms a complex with WDFY2 and AKT1. Interacts with CRY1. Interacts with PPIA/CYPA; the interaction promotes FOXO1 dephosphorylation, nuclear accumulation and transcriptional activity. Interacts with TOX4; FOXO1 is required for full induction of TOX4-dependent activity and the interaction is inhibited by insulin. Interacts (when phosphorylated on Ser-253) with STUB1/CHIP. Phosphorylation by NLK promotes nuclear export and inhibits the transcriptional activity. In response to growth factors, phosphorylation on Thr-24, Ser-253 and Ser-319 by PKB/AKT1 promotes nuclear export and inactivation of transactivational activity. Phosphorylation on Thr-24 is required for binding 14-3-3 proteins. Phosphorylation of Ser-253 decreases DNA-binding activity and promotes the phosphorylation of Thr-24 and Ser-316, permitting phosphorylation of Ser-319 and Ser-322, probably by CDK1, leading to nuclear exclusion and loss of function. Stress signals, such as response to oxygen or nitric oxide, attenuate the PKB/AKT1-mediated phosphorylation leading to nuclear retention. Phosphorylation of Ser-326 is independent of IGF1 and leads to reduced function. Dephosphorylated on Thr-24 and Ser-253 by PP2A in beta-cells under oxidative stress leading to nuclear retention. Phosphorylation of Ser-246 by CDK1 disrupts binding of 14-3-3 proteins leading to nuclear accumulation and has no effect on DNA-binding nor transcriptional activity. Phosphorylation by STK4/MST1 on Ser-209, upon oxidative stress, inhibits binding to 14-3-3 proteins and nuclear export. PPIA/CYPA promotes its dephosphorylation on Ser-253. In terms of processing, ubiquitinated by SKP2. Ubiquitinated, leading to proteasomal degradation. Ubiquitinated by STUB1/CHIP; when Ser-253 is phosphorylated. Post-translationally, methylation inhibits PKB/AKT1-mediated phosphorylation at Ser-253, promoting nuclear retention and increasing the transcriptional activity and cell death. Methylation increased by oxidative stress. Acetylation at Lys-259 and Lys-271 are necessary for autophagic cell death induction. Deacetylated by SIRT2 in response to oxidative stress or serum deprivation, thereby negatively regulating FOXO1-mediated autophagic cell death. Once in the nucleus, acetylated by CREBBP/EP300. Acetylation diminishes the interaction with target DNA and attenuates the transcriptional activity. It increases the phosphorylation at Ser-253, and is required for the transcriptional inhibition by FCOR. Deacetylation by SIRT1 results in reactivation of the transcriptional activity. Acetylation of FOXO1 diminishes its binding to PPARG in adipocytes. Deacetylated by SIRT2; deacetylation of FOXO1 directly increases its repressive binding to PPARG and inhibits adipocyte differentiation. Oxidative stress by hydrogen peroxide treatment appears to promote deacetylation and uncoupling of insulin-induced phosphorylation. By contrast, resveratrol acts independently of acetylation. Acetylated at Lys-420, promoting its localization to the nucleus and transcription factor activity. Deacetylation at Lys-420 by SIRT6, promotes its translocation into the cytoplasm, preventing its transcription factor activity. Deacetylation and subsequent inhibition by SIRT6 has different effects depending on cell types: it inhibits gluconeogenesis in hepatocytes, promotes glucose sensing in pancreatic beta-cells and regulates lipid catabolism in brown adipocytes. In terms of tissue distribution, expressed in liver, white and brown adipose tissues (at protein level).

The protein resides in the cytoplasm. It localises to the nucleus. Transcription factor that is the main target of insulin signaling and regulates metabolic homeostasis in response to oxidative stress. Binds to the insulin response element (IRE) with consensus sequence 5'-TT[G/A]TTTTG-3' and the related Daf-16 family binding element (DBE) with consensus sequence 5'-TT[G/A]TTTAC-3'. Activity suppressed by insulin. Main regulator of redox balance and osteoblast numbers and controls bone mass. Orchestrates the endocrine function of the skeleton in regulating glucose metabolism. Also acts as a key regulator of chondrogenic commitment of skeletal progenitor cells in response to lipid availability: when lipids levels are low, translocates to the nucleus and promotes expression of SOX9, which induces chondrogenic commitment and suppresses fatty acid oxidation. Acts synergistically with ATF4 to suppress osteocalcin/BGLAP activity, increasing glucose levels and triggering glucose intolerance and insulin insensitivity. Also suppresses the transcriptional activity of RUNX2, an upstream activator of osteocalcin/BGLAP. Acts as an inhibitor of glucose sensing in pancreatic beta cells by acting as a transcription repressor and suppressing expression of PDX1. In hepatocytes, promotes gluconeogenesis by acting together with PPARGC1A and CEBPA to activate the expression of genes such as IGFBP1, G6PC1 and PCK1. Also promotes gluconeogenesis by directly promoting expression of PPARGC1A and G6PC1. Important regulator of cell death acting downstream of CDK1, PKB/AKT1 and STK4/MST1. Promotes neural cell death. Mediates insulin action on adipose tissue. Regulates the expression of adipogenic genes such as PPARG during preadipocyte differentiation and, adipocyte size and adipose tissue-specific gene expression in response to excessive calorie intake. Regulates the transcriptional activity of GADD45A and repair of nitric oxide-damaged DNA in beta-cells. Required for the autophagic cell death induction in response to starvation or oxidative stress in a transcription-independent manner. Mediates the function of MLIP in cardiomyocytes hypertrophy and cardiac remodeling. Positive regulator of apoptosis in cardiac smooth muscle cells as a result of its transcriptional activation of pro-apoptotic genes. Regulates endothelial cell (EC) viability and apoptosis in a PPIA/CYPA-dependent manner via transcription of CCL2 and BCL2L11 which are involved in EC chemotaxis and apoptosis. This Mus musculus (Mouse) protein is Forkhead box protein O1 (Foxo1).